A 189-amino-acid chain; its full sequence is UPF0301 protein PputW619_0469 (189 aa).

This sequence belongs to the UPF0301 (AlgH) family.

The protein is UPF0301 protein PputW619_0469 of Pseudomonas putida (strain W619).